We begin with the raw amino-acid sequence, 739 residues long: Phosphoribosylformylglycinamidine synthase subunit PurL (739 aa).

His-53 is an active-site residue. Positions 56 and 95 each coordinate ATP. Glu-97 contributes to the Mg(2+) binding site. Substrate is bound by residues Ser-98–His-101 and Arg-120. The active-site Proton acceptor is the His-99. Mg(2+) is bound at residue Asp-121. Residue Gln-244 coordinates substrate. A Mg(2+)-binding site is contributed by Asp-274. Glu-318–Gln-320 lines the substrate pocket. Asp-501 and Gly-538 together coordinate ATP. Residue Asn-539 coordinates Mg(2+). Residue Ser-541 participates in substrate binding.

This sequence belongs to the FGAMS family. Monomer. Part of the FGAM synthase complex composed of 1 PurL, 1 PurQ and 2 PurS subunits.

Its subcellular location is the cytoplasm. It carries out the reaction N(2)-formyl-N(1)-(5-phospho-beta-D-ribosyl)glycinamide + L-glutamine + ATP + H2O = 2-formamido-N(1)-(5-O-phospho-beta-D-ribosyl)acetamidine + L-glutamate + ADP + phosphate + H(+). It functions in the pathway purine metabolism; IMP biosynthesis via de novo pathway; 5-amino-1-(5-phospho-D-ribosyl)imidazole from N(2)-formyl-N(1)-(5-phospho-D-ribosyl)glycinamide: step 1/2. In terms of biological role, part of the phosphoribosylformylglycinamidine synthase complex involved in the purines biosynthetic pathway. Catalyzes the ATP-dependent conversion of formylglycinamide ribonucleotide (FGAR) and glutamine to yield formylglycinamidine ribonucleotide (FGAM) and glutamate. The FGAM synthase complex is composed of three subunits. PurQ produces an ammonia molecule by converting glutamine to glutamate. PurL transfers the ammonia molecule to FGAR to form FGAM in an ATP-dependent manner. PurS interacts with PurQ and PurL and is thought to assist in the transfer of the ammonia molecule from PurQ to PurL. The chain is Phosphoribosylformylglycinamidine synthase subunit PurL from Listeria monocytogenes serotype 4b (strain F2365).